A 219-amino-acid chain; its full sequence is GPI-anchored hemophore PGA7 (219 aa).

A signal peptide spans 1-13; sequence MHFIFYLILLVSA. The region spanning 17–126 is the CFEM domain; sequence GNFGTYPKVP…SMLSTAAGDA (110 aa). Intrachain disulfides connect Cys45–Cys85, Cys49–Cys80, Cys59–Cys66, and Cys68–Cys101. Asp63 provides a ligand contact to heme. A disordered region spans residues 151 to 194; the sequence is VVSETGSASETGSSESAQSTTTGSSSTGSSSTDSSSSSSSSPSS. The segment covering 153–194 has biased composition (low complexity); it reads SETGSASETGSSESAQSTTTGSSSTGSSSTDSSSSSSSSPSS. The GPI-anchor amidated serine moiety is linked to residue Ser194. A propeptide spans 195–219 (removed in mature form); that stretch reads SANFAVLQTGGIGSVILGFMMYLLV.

This sequence belongs to the RBT5 family. Interacts with RBT5. Post-translationally, the GPI-anchor is attached to the protein in the endoplasmic reticulum and serves to target the protein to the cell surface. There, the glucosamine-inositol phospholipid moiety is cleaved off and the GPI-modified mannoprotein is covalently attached via its lipidless GPI glycan remnant to the 1,6-beta-glucan of the outer cell wall layer.

The protein localises to the secreted. It localises to the cell wall. The protein resides in the cell membrane. In terms of biological role, GPI-linked hyphal surface heme-binding protein involved in heme-iron utilization. Heme transfer occurs between PGA7, RBT5 and CSA2 supporting a model in which the 3 CFEM proteins cooperate in a heme-acquisition system and form a cross-cell wall heme-transfer cascade. The ability to acquire iron from host tissues is a major virulence factor of pathogenic microorganisms. Required for biofilm formation. The protein is GPI-anchored hemophore PGA7 of Candida albicans (strain SC5314 / ATCC MYA-2876) (Yeast).